A 454-amino-acid chain; its full sequence is Mogroside I-E synthase (454 aa).

Catalysis depends on histidine 18, which acts as the Proton acceptor. Histidine 18 contacts an anthocyanidin. The active-site Charge relay is the aspartate 111. An an anthocyanidin-binding site is contributed by histidine 144. The cysteines at positions 259 and 331 are disulfide-linked. 7 residues coordinate UDP-alpha-D-glucose: serine 278, cysteine 331, glutamine 333, tryptophan 351, asparagine 352, serine 353, and glutamate 356. Alanine 371 contributes to the an anthocyanidin binding site. Residues aspartate 372 and glutamine 373 each coordinate UDP-alpha-D-glucose.

It belongs to the UDP-glycosyltransferase family. In terms of tissue distribution, highly expressed in young fruits 15 days after anthesis (15-DAA).

The enzyme catalyses mogrol + UDP-alpha-D-glucose = mogroside IE + UDP + H(+). The protein operates within secondary metabolite biosynthesis; terpenoid biosynthesis. Activity is increased by Mg(2+). Its function is as follows. UDP-glycosyltransferase involved in the biosynthesis of cucurbitacin and mogroside tetracyclic triterpene natural products (e.g. siamenoside I and mogrosides IV, V and VI). Cucurbitacins have cytotoxic properties and exhibit deterrent taste as a defense barrier against herbivores. Mogrosides are nonsugar highly oxygenated compounds used as high-intensity zero-calorie sweeteners; they also possess pharmacological properties such as regulating immunity, lowering blood sugar and lipid levels, protecting the liver, and acting as antioxidants and antitumor agents. Catalyzes the transfer of a glucose moiety to the C-3 hydroxyl of mogrol to form mogroside I-E. Besides mogrol, UGT74AC1 also shows activity in vitro with quercetin and naringenin as substrate. The protein is Mogroside I-E synthase of Siraitia grosvenorii (Monk's fruit).